A 372-amino-acid polypeptide reads, in one-letter code: Transaldolase (372 aa).

The active-site Schiff-base intermediate with substrate is the Lys-140.

This sequence belongs to the transaldolase family. Type 2 subfamily.

Its subcellular location is the cytoplasm. It catalyses the reaction D-sedoheptulose 7-phosphate + D-glyceraldehyde 3-phosphate = D-erythrose 4-phosphate + beta-D-fructose 6-phosphate. Its pathway is carbohydrate degradation; pentose phosphate pathway; D-glyceraldehyde 3-phosphate and beta-D-fructose 6-phosphate from D-ribose 5-phosphate and D-xylulose 5-phosphate (non-oxidative stage): step 2/3. Its function is as follows. Transaldolase is important for the balance of metabolites in the pentose-phosphate pathway. The sequence is that of Transaldolase from Acidothermus cellulolyticus (strain ATCC 43068 / DSM 8971 / 11B).